The chain runs to 500 residues: Probable cytosol aminopeptidase (500 aa).

Mn(2+)-binding residues include lysine 265 and aspartate 270. Lysine 277 is an active-site residue. The Mn(2+) site is built by aspartate 288, aspartate 347, and glutamate 349. Arginine 351 is a catalytic residue.

It belongs to the peptidase M17 family. Mn(2+) serves as cofactor.

It is found in the cytoplasm. The catalysed reaction is Release of an N-terminal amino acid, Xaa-|-Yaa-, in which Xaa is preferably Leu, but may be other amino acids including Pro although not Arg or Lys, and Yaa may be Pro. Amino acid amides and methyl esters are also readily hydrolyzed, but rates on arylamides are exceedingly low.. It carries out the reaction Release of an N-terminal amino acid, preferentially leucine, but not glutamic or aspartic acids.. In terms of biological role, presumably involved in the processing and regular turnover of intracellular proteins. Catalyzes the removal of unsubstituted N-terminal amino acids from various peptides. This chain is Probable cytosol aminopeptidase, found in Rickettsia typhi (strain ATCC VR-144 / Wilmington).